Here is a 148-residue protein sequence, read N- to C-terminus: Large ribosomal subunit protein uL15 (148 aa).

The segment covering 1–30 (MTHSKRNTRKLRGHVSHGHGRVGKHRKHPG) has biased composition (basic residues). Positions 1–38 (MTHSKRNTRKLRGHVSHGHGRVGKHRKHPGGRGMAGPE) are disordered.

It belongs to the universal ribosomal protein uL15 family.

This is Large ribosomal subunit protein uL15 (RPL27A) from Euplotes crassus.